The following is a 430-amino-acid chain: Sorting nexin-30 (430 aa).

The span at 1 to 18 (MSNGGTPRSLPSSGQKSI) shows a compositional bias: polar residues. Residues 1-66 (MSNGGTPRSL…SSPASSSSLL (66 aa)) form a disordered region. Residues 57 to 66 (SSPASSSSLL) show a composition bias toward low complexity. Positions 80–201 (RDLFVTVDDP…AFLSAKDLNK (122 aa)) constitute a PX domain. Residues R123, Q125, K153, and R167 each contribute to the a 1,2-diacyl-sn-glycero-3-phospho-(1D-myo-inositol-3-phosphate) site. In terms of domain architecture, BAR spans 223–428 (KLRGRPVEFA…LQDKQDAKGE (206 aa)).

This sequence belongs to the sorting nexin family.

The protein resides in the early endosome membrane. In terms of biological role, involved in the regulation of endocytosis and in several stages of intracellular trafficking. Together with snx4, involved in autophagosome assembly. The chain is Sorting nexin-30 (snx30) from Danio rerio (Zebrafish).